Reading from the N-terminus, the 126-residue chain is Protein K7 (126 aa).

A helical membrane pass occupies residues 24–44; sequence LPLHLWILCSLLAFLPLLVFI.

Interacts with host CAMLG; this interaction allows efficient apoptosis inhibition. Additionally, interacts with vGPCR/ORF74 and induces its proteasomeal degradation.

It localises to the host membrane. The protein localises to the host mitochondrion. Plays a role in the inhibition of host apoptosis to allow completion of the viral lytic replication and may thus favor the maintenance of persistent infection in infected host. In Homo sapiens (Human), this protein is Protein K7 (K7).